Reading from the N-terminus, the 342-residue chain is Small GTPase LIP1 (342 aa).

Residues 12-285 (KEQILAPLCG…FHGDPYKYNN (274 aa)) are small GTPase-like. GTP contacts are provided by residues 29–36 (GDSGVGKT), 90–94 (DVSGH), and 160–163 (NKAD). Disordered regions lie at residues 274–313 (TSFH…TPDN) and 323–342 (SVQE…DINV). Polar residues predominate over residues 323-333 (SVQETTNNGSA).

This sequence belongs to the small GTPase superfamily.

The protein localises to the nucleus. It is found in the cytoplasm. Its function is as follows. Functional small GTPase that acts as a negative factor controlling the light-dependent period shortening of circadian rhythms and light-induced phase resetting during the subjective night. May protect the clock from excessive or mistimed light. Suppresses red and blue light-mediated photomorphogenesis and is required for light-controlled inhibition of endoreplication and tolerance to salt stress. The entrainment of the circadian clock is independent from the other pleiotropic effects. Could be a regulator of seedling establishment. This chain is Small GTPase LIP1, found in Arabidopsis thaliana (Mouse-ear cress).